A 679-amino-acid polypeptide reads, in one-letter code: Biosynthetic arginine decarboxylase (679 aa).

The disordered stretch occupies residues 1 to 43 (MKHRGQEEMGVESTATSDEVVKVPANGNKLEGKNHKQKKLLPT). Lysine 149 carries the N6-(pyridoxal phosphate)lysine modification. Position 331–341 (331–341 (LDVGGGLGVDY)) interacts with substrate.

It belongs to the Orn/Lys/Arg decarboxylase class-II family. SpeA subfamily. Requires Mg(2+) as cofactor. Pyridoxal 5'-phosphate serves as cofactor.

It carries out the reaction L-arginine + H(+) = agmatine + CO2. Functionally, catalyzes the biosynthesis of agmatine from arginine. The polypeptide is Biosynthetic arginine decarboxylase (Nostoc sp. (strain PCC 7120 / SAG 25.82 / UTEX 2576)).